A 255-amino-acid polypeptide reads, in one-letter code: Hemin import ATP-binding protein HmuV (255 aa).

The 237-residue stretch at 2–238 (LQVEGLYLCR…AALKAVYGID (237 aa)) folds into the ABC transporter domain. An ATP-binding site is contributed by 34–41 (GPNGAGKS).

Belongs to the ABC transporter superfamily. Heme (hemin) importer (TC 3.A.1.14.5) family. As to quaternary structure, the complex is composed of two ATP-binding proteins (HmuV), two transmembrane proteins (HmuU) and a solute-binding protein (HmuT).

The protein resides in the cell inner membrane. Its function is as follows. Part of the ABC transporter complex HmuTUV involved in hemin import. Responsible for energy coupling to the transport system. This Pseudomonas putida (strain ATCC 47054 / DSM 6125 / CFBP 8728 / NCIMB 11950 / KT2440) protein is Hemin import ATP-binding protein HmuV.